Here is a 319-residue protein sequence, read N- to C-terminus: UDP-3-O-acylglucosamine N-acyltransferase (319 aa).

The active-site Proton acceptor is His-230.

It belongs to the transferase hexapeptide repeat family. LpxD subfamily. In terms of assembly, homotrimer.

It carries out the reaction a UDP-3-O-[(3R)-3-hydroxyacyl]-alpha-D-glucosamine + a (3R)-hydroxyacyl-[ACP] = a UDP-2-N,3-O-bis[(3R)-3-hydroxyacyl]-alpha-D-glucosamine + holo-[ACP] + H(+). Its pathway is bacterial outer membrane biogenesis; LPS lipid A biosynthesis. Catalyzes the N-acylation of UDP-3-O-acylglucosamine using 3-hydroxyacyl-ACP as the acyl donor. Is involved in the biosynthesis of lipid A, a phosphorylated glycolipid that anchors the lipopolysaccharide to the outer membrane of the cell. This chain is UDP-3-O-acylglucosamine N-acyltransferase, found in Campylobacter lari (strain RM2100 / D67 / ATCC BAA-1060).